Consider the following 66-residue polypeptide: Phylloseptin-Az3 (66 aa).

An N-terminal signal peptide occupies residues Met1–Cys22. The propeptide occupies Glu23–Glu44. At Phe65 the chain carries Phenylalanine amide.

Expressed by the skin glands.

The protein localises to the secreted. Has antimicrobial activity. The sequence is that of Phylloseptin-Az3 from Pithecopus azureus (Orange-legged monkey tree frog).